Consider the following 243-residue polypeptide: Precursor of CEP9 (243 aa).

The signal sequence occupies residues 1-26; that stretch reads MKLLSITLTSIVISMVFYQTPITTEA. A propeptide spanning residues 28-44 is cleaved from the precursor; the sequence is SLRKTNDQDHFKAGFTD. Disordered stretches follow at residues 42–63, 91–173, and 189–243; these read FTDD…KKGN, KTGS…VKGF, and NGQD…EPKA. A Hydroxyproline; partial modification is found at Pro48. Pro51 carries the hydroxyproline modification. Residue Pro55 is modified to Hydroxyproline; partial. Residues 60 to 96 constitute a propeptide that is removed on maturation; the sequence is KKGNVNVEGFQDDFKPTEGRKLLKTNVQDHFKTGSTD. 3 positions are modified to hydroxyproline: Pro100, Pro103, and Pro107. Positions 112–148 are excised as a propeptide; the sequence is KKGNVNVESSEDDFKHKEGRKLQQTNGQNHFKTGSTD. Positions 133 to 147 are enriched in polar residues; it reads LQQTNGQNHFKTGST. Hydroxyproline occurs at positions 152, 155, and 159. A propeptide spanning residues 164–200 is cleaved from the precursor; that stretch reads KKGHANVKGFKDDFAPTEEIRLQKMNGQDHFKTGSTD. 3 positions are modified to hydroxyproline: Pro204, Pro207, and Pro211. Residues 216-219 constitute a propeptide that is removed on maturation; that stretch reads KKGD. Hydroxyproline occurs at positions 223, 226, and 230. The propeptide occupies 235–243; sequence AVKNDEPKA.

This sequence belongs to the C-terminally encoded plant signaling peptide (CEP) family. Interacts with CEP receptors (e.g. CEPR1 and CEPR2). In terms of processing, hydroxylated peptide is more active than non-hydroxylated peptide. The mature small signaling peptide is generated by proteolytic processing of the longer precursor. Expressed in lateral root primordia and in lateral roots excluding the meristem region. Also present in the aerial tissues, such as leaf petioles and the shoot apex region.

The protein localises to the secreted. Its subcellular location is the extracellular space. The protein resides in the apoplast. Its function is as follows. Extracellular signaling peptide that represses primary root growth rate and significantly inhibits lateral root formation. Modulates leaf morphology. Regulates systemic nitrogen (N)-demand signaling. Mediates up-regulation of genes involved in N uptake and assimilation pathways. The polypeptide is Precursor of CEP9 (Arabidopsis thaliana (Mouse-ear cress)).